Here is a 476-residue protein sequence, read N- to C-terminus: Casein kinase 1-like protein 7 (476 aa).

Positions 9-278 (FKLGKKIGSG…LKRLFRDLFI (270 aa)) constitute a Protein kinase domain. Residues 15 to 23 (IGSGSFGEL) and lysine 38 contribute to the ATP site. Aspartate 128 (proton acceptor) is an active-site residue. Disordered stretches follow at residues 299–324 (GSSSGSSSRTRHHTTAKPGFNADPIE) and 340–464 (PGAV…TRED). Residues 357 to 367 (PRDRSRSRNSD) are compositionally biased toward basic and acidic residues. Low complexity predominate over residues 382 to 422 (ANSSSRYRASSSRKAVAASSSRPSSAGGPSESRTSSRLVSS). A compositionally biased stretch (gly residues) spans 423 to 432 (SGGGGSGSGN).

The protein belongs to the protein kinase superfamily. CK1 Ser/Thr protein kinase family. Casein kinase I subfamily. As to quaternary structure, monomer. Autophosphorylated.

It localises to the cytoplasm. It carries out the reaction L-seryl-[protein] + ATP = O-phospho-L-seryl-[protein] + ADP + H(+). The enzyme catalyses L-threonyl-[protein] + ATP = O-phospho-L-threonyl-[protein] + ADP + H(+). Its function is as follows. Casein kinases are operationally defined by their preferential utilization of acidic proteins such as caseins as substrates. It can phosphorylate a large number of proteins. In Arabidopsis thaliana (Mouse-ear cress), this protein is Casein kinase 1-like protein 7.